Consider the following 92-residue polypeptide: MTKRTKKAGIVGKYGTRYGASLRKQIKKMEVSQHSKFFCEFCGKFAVKRKAVGIWGCKDCGKVKAGGAYTLNTPSAVTVRSTIRRLREQTEG.

Residues 39–60 (CEFCGKFAVKRKAVGIWGCKDC) form a C4-type zinc finger.

This sequence belongs to the eukaryotic ribosomal protein eL43 family.

In Pseudotsuga menziesii (Douglas-fir), this protein is Large ribosomal subunit protein eL43 (RPL37A).